Here is a 319-residue protein sequence, read N- to C-terminus: Probable secreted beta-glucosidase C2G2.17c (319 aa).

Residues Met1–Ala19 form the signal peptide. Asn36, Asn39, Asn45, Asn48, and Asn221 each carry an N-linked (GlcNAc...) asparagine glycan.

This sequence belongs to the SUN family.

The protein resides in the secreted. Functionally, cell surface beta-glucosidase involved in cell wall biogenesis. In Schizosaccharomyces pombe (strain 972 / ATCC 24843) (Fission yeast), this protein is Probable secreted beta-glucosidase C2G2.17c.